The sequence spans 220 residues: Ribose-5-phosphate isomerase A (220 aa).

Substrate contacts are provided by residues 28–31 (TGST), 81–84 (DGAD), and 94–97 (KGGG). Glutamate 103 serves as the catalytic Proton acceptor. Residue lysine 121 coordinates substrate.

The protein belongs to the ribose 5-phosphate isomerase family. As to quaternary structure, homodimer.

The enzyme catalyses aldehydo-D-ribose 5-phosphate = D-ribulose 5-phosphate. It participates in carbohydrate degradation; pentose phosphate pathway; D-ribose 5-phosphate from D-ribulose 5-phosphate (non-oxidative stage): step 1/1. Catalyzes the reversible conversion of ribose-5-phosphate to ribulose 5-phosphate. The chain is Ribose-5-phosphate isomerase A from Shewanella baltica (strain OS185).